We begin with the raw amino-acid sequence, 60 residues long: Beta-defensin 11 (60 aa).

The first 22 residues, 1–22, serve as a signal peptide directing secretion; the sequence is MRLHHLLLALLFLVLSAGSGIS. 3 disulfides stabilise this stretch: cysteine 27-cysteine 56, cysteine 34-cysteine 49, and cysteine 39-cysteine 57.

This sequence belongs to the beta-defensin family. Neutrophilic granules.

It is found in the secreted. Has bactericidal activity. Active against E.coli ML35 and S.aureus 502A. The chain is Beta-defensin 11 (DEFB11) from Bos taurus (Bovine).